Reading from the N-terminus, the 256-residue chain is Major prion protein (256 aa).

An N-terminal signal peptide occupies residues 1–24; sequence MVKSHIGSWILVLFVAMWSDVGLC. Positions 25–233 are interaction with GRB2, ERI3 and SYN1; sequence KKRPKPGGGW…ESQAYYQRGA (209 aa). The disordered stretch occupies residues 28–110; sequence PKPGGGWNTG…QWNKPSKPKT (83 aa). Tandem repeats lie at residues 54–62, 63–70, 71–78, 79–86, and 87–95. Residues 54–95 form a 5 X 8 AA tandem repeats of P-H-G-G-G-W-G-Q region; sequence PQGGGGWGQPHGGGWGQPHGGGWGQPHGGGWGQPHGGGGWGQ. Residues 55–97 show a composition bias toward gly residues; the sequence is QGGGGWGQPHGGGWGQPHGGGWGQPHGGGWGQPHGGGGWGQGG. Positions 64, 65, 66, 72, 73, 74, 80, 81, 82, 88, 90, and 91 each coordinate Cu(2+). A disulfide bond links cysteine 182 and cysteine 217. 2 N-linked (GlcNAc...) (complex) asparagine glycosylation sites follow: asparagine 184 and asparagine 200. Alanine 233 carries the GPI-anchor amidated alanine lipid modification. The propeptide at 234–256 is removed in mature form; that stretch reads SVILFSSPPVILLISFLIFLIVG.

The protein belongs to the prion family. Monomer and homodimer. Has a tendency to aggregate into amyloid fibrils containing a cross-beta spine, formed by a steric zipper of superposed beta-strands. Soluble oligomers may represent an intermediate stage on the path to fibril formation. Copper binding may promote oligomerization. Interacts with GRB2, APP, ERI3/PRNPIP and SYN1. Mislocalized cytosolically exposed PrP interacts with MGRN1; this interaction alters MGRN1 subcellular location and causes lysosomal enlargement. Interacts with KIAA1191.

Its subcellular location is the cell membrane. The protein resides in the golgi apparatus. In terms of biological role, its primary physiological function is unclear. Has cytoprotective activity against internal or environmental stresses. May play a role in neuronal development and synaptic plasticity. May be required for neuronal myelin sheath maintenance. May play a role in iron uptake and iron homeostasis. Soluble oligomers are toxic to cultured neuroblastoma cells and induce apoptosis (in vitro). Association with GPC1 (via its heparan sulfate chains) targets PRNP to lipid rafts. Also provides Cu(2+) or Zn(2+) for the ascorbate-mediated GPC1 deaminase degradation of its heparan sulfate side chains. The chain is Major prion protein (PRNP) from Ovis aries (Sheep).